A 932-amino-acid chain; its full sequence is Alanine--tRNA ligase (932 aa).

4 residues coordinate Zn(2+): His623, His627, Cys726, and His730. Residues 893–916 (RVGGGGGGPPDFAQGGGPDVDSLD) form a disordered region. A compositionally biased stretch (gly residues) spans 894-910 (VGGGGGGPPDFAQGGGP).

The protein belongs to the class-II aminoacyl-tRNA synthetase family. Zn(2+) serves as cofactor.

It localises to the cytoplasm. It catalyses the reaction tRNA(Ala) + L-alanine + ATP = L-alanyl-tRNA(Ala) + AMP + diphosphate. Functionally, catalyzes the attachment of alanine to tRNA(Ala) in a two-step reaction: alanine is first activated by ATP to form Ala-AMP and then transferred to the acceptor end of tRNA(Ala). Also edits incorrectly charged Ser-tRNA(Ala) and Gly-tRNA(Ala) via its editing domain. The protein is Alanine--tRNA ligase of Natronomonas pharaonis (strain ATCC 35678 / DSM 2160 / CIP 103997 / JCM 8858 / NBRC 14720 / NCIMB 2260 / Gabara) (Halobacterium pharaonis).